The following is a 130-amino-acid chain: Small ribosomal subunit protein uS9 (130 aa).

The protein belongs to the universal ribosomal protein uS9 family.

The polypeptide is Small ribosomal subunit protein uS9 (Saccharophagus degradans (strain 2-40 / ATCC 43961 / DSM 17024)).